Here is a 159-residue protein sequence, read N- to C-terminus: Endoribonuclease YbeY (159 aa).

The Zn(2+) site is built by His125, His129, and His135.

This sequence belongs to the endoribonuclease YbeY family. Requires Zn(2+) as cofactor.

The protein localises to the cytoplasm. Functionally, single strand-specific metallo-endoribonuclease involved in late-stage 70S ribosome quality control and in maturation of the 3' terminus of the 16S rRNA. The sequence is that of Endoribonuclease YbeY from Limosilactobacillus reuteri (strain DSM 20016) (Lactobacillus reuteri).